The primary structure comprises 517 residues: Diacylglycerol O-acyltransferase 1C (517 aa).

Residues 1–82 (MAISDVPAAA…NVGAAANDAG (82 aa)) form a disordered region. Over residues 8–17 (AAAGTTATTT) the composition is skewed to low complexity. Residues 53-64 (ITDDDNIKDHKP) are compositionally biased toward basic and acidic residues. Residues 71–81 (DDNVGAAANDA) are compositionally biased toward low complexity. The next 7 membrane-spanning stretches (helical) occupy residues 121–141 (HAGL…RLII), 165–185 (WPLF…FVVE), 197–217 (VVVL…VLVI), 222–242 (SAFV…LKLV), 272–292 (YPYT…TLCY), 305–325 (GWVF…GFII), and 361–381 (VWLC…AELV). Residues 388 to 394 (FYKDWWN) carry the FYXDWWN motif motif. Helical transmembrane passes span 429 to 449 (GAAS…CIAV), 451 to 471 (CHMF…LVLI), and 484 to 504 (VGNM…SVLL). The active site involves His443.

The protein belongs to the membrane-bound acyltransferase family. Sterol o-acyltransferase subfamily.

Its subcellular location is the endoplasmic reticulum membrane. It catalyses the reaction an acyl-CoA + a 1,2-diacyl-sn-glycerol = a triacyl-sn-glycerol + CoA. The protein operates within glycerolipid metabolism; triacylglycerol biosynthesis. In terms of biological role, involved in triacylglycerol (TAG) synthesis. Catalyzes the acylation of the sn-3 hydroxy group of sn-1,2-diacylglycerol using acyl-CoA. This Glycine max (Soybean) protein is Diacylglycerol O-acyltransferase 1C.